The primary structure comprises 432 residues: Ectonucleoside triphosphate diphosphohydrolase 5 (432 aa).

The N-terminal stretch at 1-24 (MALYQGAAFFMLVASCVCSTVFHR) is a signal peptide. E175 acts as the Proton acceptor in catalysis. The N-linked (GlcNAc...) asparagine glycan is linked to N235. 2 disulfide bridges follow: C275–C307 and C367–C381. N-linked (GlcNAc...) asparagine glycosylation occurs at N372.

This sequence belongs to the GDA1/CD39 NTPase family. In terms of assembly, monomer; active form. Homodimer; disulfide-linked. Homodimers are enzymatically inactive. Ca(2+) is required as a cofactor. Requires Mg(2+) as cofactor. N-glycosylated; high-mannose type.

The protein localises to the endoplasmic reticulum. Its subcellular location is the secreted. It carries out the reaction a ribonucleoside 5'-diphosphate + H2O = a ribonucleoside 5'-phosphate + phosphate + H(+). The enzyme catalyses GDP + H2O = GMP + phosphate + H(+). It catalyses the reaction UDP + H2O = UMP + phosphate + H(+). The catalysed reaction is IDP + H2O = IMP + phosphate + H(+). It carries out the reaction CDP + H2O = CMP + phosphate + H(+). The enzyme catalyses ADP + H2O = AMP + phosphate + H(+). The protein operates within protein modification; protein glycosylation. Its function is as follows. Hydrolyzes nucleoside diphosphates with a preference for GDP, IDP and UDP compared to ADP and CDP. In the lumen of the endoplasmic reticulum, hydrolyzes UDP that acts as an end-product feedback inhibitor of the UDP-Glc:glycoprotein glucosyltransferases. UMP can be transported back by an UDP-sugar antiporter to the cytosol where it is consumed to regenerate UDP-glucose. Therefore, it positively regulates protein reglucosylation by clearing UDP from the ER lumen and by promoting the regeneration of UDP-glucose. Protein reglucosylation is essential to proper glycoprotein folding and quality control in the ER. The chain is Ectonucleoside triphosphate diphosphohydrolase 5 (ENTPD5) from Bos taurus (Bovine).